The primary structure comprises 592 residues: MAPGQLALFSVSDKTGLVEFARNLTALGLNLVASGGTAKALRDAGLAVRDVSELTGFPEMLGGRVKTLHPAVHAGILARNIPEDNADMARLDFNLIRVVACNLYPFVKTVASPGVTVEEAVEQIDIGGVTLLRAAAKNHARVTVVCEPEDYVVVSTEMQSSESKDTSLETRRQLALKAFTHTAQYDEAISDYFRKQYSKGVSQMPLRYGMNPHQTPAQLYTLQPKLPITVLNGAPGFINLCDALNAWQLVKELKEALGIPAAASFKHVSPAGAAVGIPLSEDEAKVCMVYDLYKTLTPISAAYARARGADRMSSFGDFVALSDVCDVPTAKIISREVSDGIIAPGYEEEALTILSKKKNGNYCVLQMDQSYKPDENEVRTLFGLHLSQKRNNGVVDKSLFSNVVTKNKDLPESALRDLIVATIAVKYTQSNSVCYAKNGQVIGIGAGQQSRIHCTRLAGDKANYWWLRHHPQVLSMKFKTGVKRAEISNAIDQYVTGTIGEDEDLIKWKALFEEVPELLTEAEKKEWVEKLTEVSISSDAFFPFRDNVDRAKRSGVAYIAAPSGSAADKVVIEACDELGIILAHTNLRLFHH.

Met1 is subject to N-acetylmethionine. Residues 2-146 (APGQLALFSV…KNHARVTVVC (145 aa)) form the MGS-like domain. Residues 2 to 198 (APGQLALFSV…ISDYFRKQYS (197 aa)) form an IMP cyclohydrolase region. IMP is bound by residues 12–14 (SDK), 34–37 (SGGT), 64–67 (RVKT), 101–102 (CN), and 125–126 (DI). The active-site Proton donor/acceptor; for FAICAR cyclization activity is the Lys137. The residue at position 199 (Lys199) is an N6-acetyllysine. The tract at residues 199–592 (KGVSQMPLRY…AHTNLRLFHH (394 aa)) is AICAR formyltransferase. 5-amino-1-(5-phospho-beta-D-ribosyl)imidazole-4-carboxamide-binding positions include 207–208 (RY), His267, Gly316, Asp339, Asn431, and Arg451. The active-site Proton acceptor; for AICAR formyltransferase activity is the His267. Residue Ile452 coordinates (6R)-10-formyltetrahydrofolate. Phe541 provides a ligand contact to 5-amino-1-(5-phospho-beta-D-ribosyl)imidazole-4-carboxamide. Residues Asp546 and 565–566 (SA) each bind (6R)-10-formyltetrahydrofolate. Position 588 (Arg588) interacts with 5-amino-1-(5-phospho-beta-D-ribosyl)imidazole-4-carboxamide.

It belongs to the PurH family. As to quaternary structure, homodimer. Associates with internalized INSR complexes on Golgi/endosomal membranes. Interacts with INSR; ATIC together with PRKAA2/AMPK2 and HACD3/PTPLAD1 is proposed to be part of a signaling network regulating INSR autophosphorylation and endocytosis. Present in the heart, brain, placenta, lung, liver, skeletal muscle, kidney, pancreas.

The protein localises to the cytoplasm. Its subcellular location is the cytosol. It catalyses the reaction (6R)-10-formyltetrahydrofolate + 5-amino-1-(5-phospho-beta-D-ribosyl)imidazole-4-carboxamide = 5-formamido-1-(5-phospho-D-ribosyl)imidazole-4-carboxamide + (6S)-5,6,7,8-tetrahydrofolate. The catalysed reaction is 10-formyldihydrofolate + 5-amino-1-(5-phospho-beta-D-ribosyl)imidazole-4-carboxamide = 5-formamido-1-(5-phospho-D-ribosyl)imidazole-4-carboxamide + 7,8-dihydrofolate. The enzyme catalyses IMP + H2O = 5-formamido-1-(5-phospho-D-ribosyl)imidazole-4-carboxamide. It carries out the reaction 5-amino-1-(5-phospho-D-ribosyl)imidazole-4-thiocarboxamide + 10-formyldihydrofolate = 6-thio-IMP + 7,8-dihydrofolate + H2O. It functions in the pathway purine metabolism; IMP biosynthesis via de novo pathway; 5-formamido-1-(5-phospho-D-ribosyl)imidazole-4-carboxamide from 5-amino-1-(5-phospho-D-ribosyl)imidazole-4-carboxamide (10-formyl THF route): step 1/1. The protein operates within purine metabolism; IMP biosynthesis via de novo pathway; IMP from 5-formamido-1-(5-phospho-D-ribosyl)imidazole-4-carboxamide: step 1/1. With respect to regulation, AMP and XMP inhibit AICAR formyltransferase activity. AICAR formyltransferase activity is inhibited by N-(6-fluoro-1-oxo-1,2-dihydroisoquinolin-7-yl)-5- [(3R)-3-hydroxypyrrolidin-1-yl]thiophene-2-sulfonamide (LSN 3213128), which acts as a tumor suppression in cancer cell lines. Functionally, bifunctional enzyme that catalyzes the last two steps of purine biosynthesis. Acts as a transformylase that incorporates a formyl group to the AMP analog AICAR (5-amino-1-(5-phospho-beta-D-ribosyl)imidazole-4-carboxamide) to produce the intermediate formyl-AICAR (FAICAR). Can use both 10-formyldihydrofolate and 10-formyltetrahydrofolate as the formyl donor in this reaction. Also catalyzes the cyclization of FAICAR to inosine monophosphate (IMP). Is able to convert thio-AICAR to 6-mercaptopurine ribonucleotide, an inhibitor of purine biosynthesis used in the treatment of human leukemias. Promotes insulin receptor/INSR autophosphorylation and is involved in INSR internalization. The chain is Bifunctional purine biosynthesis protein ATIC from Homo sapiens (Human).